The sequence spans 494 residues: Alpha-amylase-related protein (494 aa).

A signal peptide spans 1 to 20; it reads MFKFATAVILCLVAASSTLA. Gln21 is modified (pyrrolidone carboxylic acid). Cys48 and Cys104 are joined by a disulfide. Ca(2+) is bound by residues Asn118, Gln169, and Asp178. Cys157 and Cys171 form a disulfide bridge. Arg206 lines the chloride pocket. Catalysis depends on Asp208, which acts as the Nucleophile. His212 serves as a coordination point for Ca(2+). The Proton donor role is filled by Glu245. Chloride-binding residues include Asn308 and Arg343. Cystine bridges form between Cys376-Cys382, Cys418-Cys441, and Cys448-Cys460.

It belongs to the glycosyl hydrolase 13 family. Monomer. The cofactor is Ca(2+). Requires chloride as cofactor.

It localises to the secreted. It catalyses the reaction Endohydrolysis of (1-&gt;4)-alpha-D-glucosidic linkages in polysaccharides containing three or more (1-&gt;4)-alpha-linked D-glucose units.. This chain is Alpha-amylase-related protein (Amyrel), found in Drosophila bipectinata (Fruit fly).